Consider the following 413-residue polypeptide: Cardiolipin synthase B (413 aa).

2 PLD phosphodiesterase domains span residues 108-135 (VFRR…SAEH) and 285-312 (RRRP…DPLS). Residues His113, Lys115, Asp120, His290, Lys292, and Asp297 contribute to the active site. The tract at residues 390 to 413 (VGPPAQPTMETQDRVETENTGVKP) is disordered.

It belongs to the phospholipase D family. Cardiolipin synthase subfamily. ClsB sub-subfamily.

It localises to the cell membrane. It catalyses the reaction 2 a 1,2-diacyl-sn-glycero-3-phospho-(1'-sn-glycerol) = a cardiolipin + glycerol. Its function is as follows. Catalyzes the phosphatidyl group transfer from one phosphatidylglycerol molecule to another to form cardiolipin (CL) (diphosphatidylglycerol) and glycerol. This Escherichia coli O6:H1 (strain CFT073 / ATCC 700928 / UPEC) protein is Cardiolipin synthase B.